The following is a 510-amino-acid chain: Light-independent protochlorophyllide reductase subunit B (510 aa).

Asp-36 is a binding site for [4Fe-4S] cluster. Residue Asp-296 is the Proton donor of the active site. 431-432 (GM) provides a ligand contact to substrate.

This sequence belongs to the ChlB/BchB/BchZ family. As to quaternary structure, protochlorophyllide reductase is composed of three subunits; ChlL, ChlN and ChlB. Forms a heterotetramer of two ChlB and two ChlN subunits. [4Fe-4S] cluster is required as a cofactor.

It is found in the plastid. The protein resides in the chloroplast. It catalyses the reaction chlorophyllide a + oxidized 2[4Fe-4S]-[ferredoxin] + 2 ADP + 2 phosphate = protochlorophyllide a + reduced 2[4Fe-4S]-[ferredoxin] + 2 ATP + 2 H2O. Its pathway is porphyrin-containing compound metabolism; chlorophyll biosynthesis (light-independent). In terms of biological role, component of the dark-operative protochlorophyllide reductase (DPOR) that uses Mg-ATP and reduced ferredoxin to reduce ring D of protochlorophyllide (Pchlide) to form chlorophyllide a (Chlide). This reaction is light-independent. The NB-protein (ChlN-ChlB) is the catalytic component of the complex. This is Light-independent protochlorophyllide reductase subunit B from Auxenochlorella protothecoides (Green microalga).